The following is a 152-amino-acid chain: Syntaxin-8A (152 aa).

A compositionally biased stretch (low complexity) spans methionine 1–asparagine 14. The disordered stretch occupies residues methionine 1–tyrosine 22. Topologically, residues methionine 1–tyrosine 131 are cytoplasmic. Positions lysine 60–leucine 122 constitute a t-SNARE coiled-coil homology domain. Residues cysteine 132–leucine 152 form a helical; Anchor for type IV membrane protein membrane-spanning segment.

This sequence belongs to the syntaxin family. In terms of assembly, component of the SNARE complex composed of syn7A, syn8A, vamp7A and vti1A.

Its subcellular location is the endosome membrane. In terms of biological role, involved in the targeting and/or fusion of transport vesicles to their target membrane during transport of proteins from the early endosome to the lysosome. Required for fusion of late endosomes with lysosomes and homotypic lysosomal fusion. This Dictyostelium discoideum (Social amoeba) protein is Syntaxin-8A.